A 650-amino-acid chain; its full sequence is Growth hormone receptor (650 aa).

The N-terminal stretch at M1–A24 is a signal peptide. At T25–Q273 the chain is on the extracellular side. Cystine bridges form between C56-C66 and C109-C120. N-linked (GlcNAc...) asparagine glycosylation is present at N123. C134 and C148 are disulfide-bonded. Positions P159–T262 constitute a Fibronectin type-III domain. N-linked (GlcNAc...) asparagine glycosylation is found at N164, N169, and N208. A WSXWS motif motif is present at residues Y248–S252. The chain crosses the membrane as a helical span at residues F274–S297. The Cytoplasmic segment spans residues K298–Q650. A required for JAK2 binding region spans residues K303–A390. Residues I306–K314 carry the Box 1 motif motif. The UbE motif motif lies at D349–D358. S350 is modified (phosphoserine). The interval K466–M486 is disordered. Over residues L470–M486 the composition is skewed to polar residues. Phosphotyrosine occurs at positions 498 and 606.

It belongs to the type I cytokine receptor family. Type 1 subfamily. In terms of assembly, on growth hormone (GH) binding, forms homodimers and binds JAK2 via a box 1-containing domain. The soluble form (GHBP) is produced by phorbol ester-promoted proteolytic cleavage at the cell surface (shedding) by ADAM17/TACE. Shedding is inhibited by growth hormone (GH) binding to the receptor probably due to a conformational change in GHR rendering the receptor inaccessible to ADAM17. Post-translationally, on GH binding, phosphorylated on tyrosine residues in the cytoplasmic domain by JAK2. In terms of processing, ubiquitinated by the ECS(SOCS2) complex following ligand-binding and phosphorylation by JAK2, leading to its degradation by the proteasome. Regulation by the ECS(SOCS2) complex acts as a negative feedback loop of growth hormone receptor signaling. Ubiquitination is not sufficient for GHR internalization. As to expression, expressed in all tissues tested including, liver, heart, adipose tissue, mammary gland, testes, ovary, brain, kidney and muscle. Highest levels in liver.

It is found in the cell membrane. The protein resides in the secreted. Receptor for pituitary gland growth hormone (GH1) involved in regulating postnatal body growth. On ligand binding, couples to the JAK2/STAT5 pathway. Functionally, the soluble form (GHBP) acts as a reservoir of growth hormone in plasma and may be a modulator/inhibitor of GH signaling. The chain is Growth hormone receptor (Ghr) from Mus musculus (Mouse).